Consider the following 240-residue polypeptide: Lactate utilization protein C (240 aa).

Belongs to the LutC/YkgG family.

Functionally, is involved in L-lactate degradation and allows cells to grow with lactate as the sole carbon source. The chain is Lactate utilization protein C from Geobacillus kaustophilus (strain HTA426).